A 112-amino-acid polypeptide reads, in one-letter code: UPF0122 protein CPE1714 (112 aa).

This sequence belongs to the UPF0122 family.

Functionally, might take part in the signal recognition particle (SRP) pathway. This is inferred from the conservation of its genetic proximity to ftsY/ffh. May be a regulatory protein. The protein is UPF0122 protein CPE1714 of Clostridium perfringens (strain 13 / Type A).